The primary structure comprises 440 residues: Chromosome partition protein MukF (440 aa).

The leucine-zipper stretch occupies residues 208–236; the sequence is LSETSGTLRELQDTLEAAGDKLQANLLRI.

It belongs to the MukF family. As to quaternary structure, interacts, and probably forms a ternary complex, with MukE and MukB via its C-terminal region. The complex formation is stimulated by calcium or magnesium. It is required for an interaction between MukE and MukB.

Its subcellular location is the cytoplasm. The protein resides in the nucleoid. Its function is as follows. Involved in chromosome condensation, segregation and cell cycle progression. May participate in facilitating chromosome segregation by condensation DNA from both sides of a centrally located replisome during cell division. Not required for mini-F plasmid partitioning. Probably acts via its interaction with MukB and MukE. Overexpression results in anucleate cells. It has a calcium binding activity. In Photorhabdus laumondii subsp. laumondii (strain DSM 15139 / CIP 105565 / TT01) (Photorhabdus luminescens subsp. laumondii), this protein is Chromosome partition protein MukF.